A 129-amino-acid chain; its full sequence is uncharacterized protein (129 aa).

2 C2H2-type zinc fingers span residues 75-99 (FVCP…YTEH) and 101-124 (KVCP…CKKH).

Functionally, essential for virus function. This is an uncharacterized protein from Saccharolobus solfataricus (Sulfolobus solfataricus).